The following is a 389-amino-acid chain: Alanine racemase 1 (389 aa).

Lys41 acts as the Proton acceptor; specific for D-alanine in catalysis. At Lys41 the chain carries N6-(pyridoxal phosphate)lysine. Substrate is bound at residue Arg137. Tyr266 functions as the Proton acceptor; specific for L-alanine in the catalytic mechanism. Position 313 (Met313) interacts with substrate.

It belongs to the alanine racemase family. Requires pyridoxal 5'-phosphate as cofactor.

The enzyme catalyses L-alanine = D-alanine. The protein operates within amino-acid biosynthesis; D-alanine biosynthesis; D-alanine from L-alanine: step 1/1. In terms of biological role, catalyzes the interconversion of L-alanine and D-alanine. May also act on other amino acids. The protein is Alanine racemase 1 (alr1) of Bacillus subtilis (strain 168).